Reading from the N-terminus, the 339-residue chain is Adenosine deaminase (339 aa).

H15 and H17 together coordinate Zn(2+). 3 residues coordinate substrate: H17, D19, and G172. H199 serves as a coordination point for Zn(2+). The active-site Proton donor is E202. D279 is a Zn(2+) binding site.

It belongs to the metallo-dependent hydrolases superfamily. Adenosine and AMP deaminases family. Adenosine deaminase subfamily. It depends on Zn(2+) as a cofactor.

The enzyme catalyses adenosine + H2O + H(+) = inosine + NH4(+). The catalysed reaction is 2'-deoxyadenosine + H2O + H(+) = 2'-deoxyinosine + NH4(+). Catalyzes the hydrolytic deamination of adenosine and 2-deoxyadenosine. The sequence is that of Adenosine deaminase from Lacticaseibacillus casei (strain BL23) (Lactobacillus casei).